We begin with the raw amino-acid sequence, 290 residues long: MTQTRLHFTTGKIEAERIFAALELAFEDEGLPIAVLEVDEDQDIHEVSLYADGDVDTVEARVKDILAGLALSKPVEREVLPDIDWVARSLEGLKPVRAGRFFVHGAHDRRKRHSGELAIEIEAGLAFGTGHHGTTSGCLEMLEKVVRREHPRNALDLGTGSAVLAIAVAKLAHIPVLATDIDPVAVKVAAANARLNHVKALIETVTAPGFHHPIFGRRAPFDLIVANILARPLMRLAPQMAGHIALGGSIVLSGILERQRDAVISAYVGQNFRHVRTLYREGWVTIHLKH.

4 residues coordinate S-adenosyl-L-methionine: T135, G158, D180, and N227.

This sequence belongs to the methyltransferase superfamily. PrmA family.

It is found in the cytoplasm. The catalysed reaction is L-lysyl-[protein] + 3 S-adenosyl-L-methionine = N(6),N(6),N(6)-trimethyl-L-lysyl-[protein] + 3 S-adenosyl-L-homocysteine + 3 H(+). Methylates ribosomal protein L11. This chain is Ribosomal protein L11 methyltransferase, found in Mesorhizobium japonicum (strain LMG 29417 / CECT 9101 / MAFF 303099) (Mesorhizobium loti (strain MAFF 303099)).